The sequence spans 71 residues: uncharacterized protein (71 aa).

Helical transmembrane passes span phenylalanine 9–phenylalanine 29 and phenylalanine 41–leucine 61.

It is found in the membrane. This is an uncharacterized protein from Acheta domesticus (House cricket).